The sequence spans 561 residues: 4-coumarate--CoA ligase 1 (561 aa).

The ATP site is built by S210, S211, G212, T213, T214, and K218. Residues Y260 and S264 each coordinate (E)-4-coumaroyl-AMP. K281 contributes to the CoA binding site. The interval 283–352 (EINLLLELIQ…AKFPNAKLGQ (70 aa)) is SBD1. 5 residues coordinate (E)-4-coumaroyl-AMP: A330, Q352, G353, T357, and M365. Residues Q352, G353, and T357 each coordinate ATP. The SBD2 stretch occupies residues 353-420 (GYGMTEAGPV…IRGHQIMKGY (68 aa)). ATP is bound by residues D441 and R456. Positions 458 and 462 each coordinate (E)-4-coumaroyl-AMP. 2 residues coordinate CoA: K464 and G465. Position 547 (K547) interacts with ATP.

It belongs to the ATP-dependent AMP-binding enzyme family. Mg(2+) is required as a cofactor. Preferentially expressed in roots, bolting stems and siliques. Also detected in leaves.

The enzyme catalyses (E)-4-coumarate + ATP + CoA = (E)-4-coumaroyl-CoA + AMP + diphosphate. The catalysed reaction is (E)-caffeate + ATP + CoA = (E)-caffeoyl-CoA + AMP + diphosphate. It carries out the reaction (E)-ferulate + ATP + CoA = (E)-feruloyl-CoA + AMP + diphosphate. It catalyses the reaction (E)-4-coumarate + ATP + H(+) = (E)-4-coumaroyl-AMP + diphosphate. The enzyme catalyses (E)-4-coumaroyl-AMP + CoA = (E)-4-coumaroyl-CoA + AMP + H(+). The catalysed reaction is (E)-caffeate + ATP + H(+) = (E)-caffeoyl-AMP + diphosphate. It carries out the reaction (E)-caffeoyl-AMP + CoA = (E)-caffeoyl-CoA + AMP + H(+). It catalyses the reaction (E)-ferulate + ATP + H(+) = (E)-feruloyl-AMP + diphosphate. The enzyme catalyses (E)-feruloyl-AMP + CoA = (E)-feruloyl-CoA + AMP + H(+). Its pathway is phytoalexin biosynthesis; 3,4',5-trihydroxystilbene biosynthesis; 3,4',5-trihydroxystilbene from trans-4-coumarate: step 1/2. In terms of biological role, produces CoA thioesters of a variety of hydroxy- and methoxy-substituted cinnamic acids, which are used to synthesize several phenylpropanoid-derived compounds, including anthocyanins, flavonoids, isoflavonoids, coumarins, lignin, suberin and wall-bound phenolics. Follows a two-step reaction mechanism, wherein the carboxylate substrate first undergoes adenylation by ATP, followed by a thioesterification in the presence of CoA to yield the final CoA thioesters. The sequence is that of 4-coumarate--CoA ligase 1 from Arabidopsis thaliana (Mouse-ear cress).